A 69-amino-acid polypeptide reads, in one-letter code: Guanine nucleotide-binding protein G(I)/G(S)/G(O) subunit gamma-T2 (69 aa).

Cys-66 is modified (cysteine methyl ester). Cys-66 carries S-farnesyl cysteine lipidation. Positions 67–69 (VLS) are cleaved as a propeptide — removed in mature form.

The protein belongs to the G protein gamma family. In terms of assembly, g proteins are composed of 3 units, alpha, beta and gamma.

Its subcellular location is the cell membrane. Guanine nucleotide-binding proteins (G proteins) are involved as a modulator or transducer in various transmembrane signaling systems. The beta and gamma chains are required for the GTPase activity, for replacement of GDP by GTP, and for G protein-effector interaction. The sequence is that of Guanine nucleotide-binding protein G(I)/G(S)/G(O) subunit gamma-T2 (Gngt2) from Mus musculus (Mouse).